We begin with the raw amino-acid sequence, 723 residues long: Zinc finger CCCH domain-containing protein 11A (723 aa).

3 C3H1-type zinc fingers span residues 2–29, 31–57, and 60–87; these read SKQGDDCYFYFYSTCNKGDNCPFRHCEA, LGNETICTLWKEGRCFRNVCRFRHMEI, and KRSEIPCFWENQPGGCQKSNCAFHHTKG. Disordered regions lie at residues 142-208, 223-256, 404-428, 450-526, and 565-681; these read ENSE…KQDD, KKQKEKTKKQSEGPSGVPAHPLQSRTVPVPEKEN, KRAEGERKKQRILPPSVPGKVKLEE, EKAL…VKSL, and VKPS…APLS. The segment covering 160 to 175 has biased composition (acidic residues); it reads ADDDEDDDDQLSEEGE. The stretch at 376 to 411 forms a coiled coil; it reads KTFSEALAERKQRRLEEEKQKLEEFLTEKRAEGERK. The segment covering 511–522 has biased composition (polar residues); it reads PSNQSAPNSKAQ. Over residues 609–620 the composition is skewed to low complexity; the sequence is KKAALTAAPALP. Over residues 637–649 the composition is skewed to polar residues; it reads LELQLGSQADSVE. Positions 650–672 are enriched in low complexity; sequence QSGDSSSASASSQSVAKAQQLSS.

It localises to the nucleus speckle. In terms of biological role, through its association with TREX complex components, may participate in the export and post-transcriptional coordination of selected mRNA transcripts. Binds RNA. The chain is Zinc finger CCCH domain-containing protein 11A (ZC3H11A) from Gallus gallus (Chicken).